Reading from the N-terminus, the 536-residue chain is Phosphoenolpyruvate carboxykinase (ATP) (536 aa).

Residues Arg-62, Tyr-203, and Lys-209 each coordinate substrate. Residues Lys-209, His-228, and 244–252 (GLSGTGKTT) contribute to the ATP site. The Mn(2+) site is built by Lys-209 and His-228. Asp-265 is a Mn(2+) binding site. ATP-binding positions include Glu-293, Arg-329, 445-446 (RI), and Thr-451. A substrate-binding site is contributed by Arg-329.

This sequence belongs to the phosphoenolpyruvate carboxykinase (ATP) family. As to quaternary structure, monomer. Mn(2+) is required as a cofactor.

It is found in the cytoplasm. The enzyme catalyses oxaloacetate + ATP = phosphoenolpyruvate + ADP + CO2. Its pathway is carbohydrate biosynthesis; gluconeogenesis. Its function is as follows. Involved in the gluconeogenesis. Catalyzes the conversion of oxaloacetate (OAA) to phosphoenolpyruvate (PEP) through direct phosphoryl transfer between the nucleoside triphosphate and OAA. In Actinobacillus pleuropneumoniae serotype 7 (strain AP76), this protein is Phosphoenolpyruvate carboxykinase (ATP).